We begin with the raw amino-acid sequence, 284 residues long: Pantothenate synthetase (284 aa).

30–37 (MGNLHDGH) is a binding site for ATP. The Proton donor role is filled by H37. Q61 contacts (R)-pantoate. Q61 contributes to the beta-alanine binding site. 149–152 (GEKD) lines the ATP pocket. Residue Q155 coordinates (R)-pantoate. Residues I178 and 186 to 189 (LSSR) each bind ATP.

This sequence belongs to the pantothenate synthetase family. As to quaternary structure, homodimer.

The protein resides in the cytoplasm. It catalyses the reaction (R)-pantoate + beta-alanine + ATP = (R)-pantothenate + AMP + diphosphate + H(+). The protein operates within cofactor biosynthesis; (R)-pantothenate biosynthesis; (R)-pantothenate from (R)-pantoate and beta-alanine: step 1/1. Functionally, catalyzes the condensation of pantoate with beta-alanine in an ATP-dependent reaction via a pantoyl-adenylate intermediate. In Salmonella newport (strain SL254), this protein is Pantothenate synthetase.